We begin with the raw amino-acid sequence, 237 residues long: Protein CUSTOS (237 aa).

Disordered regions lie at residues 1–23 (MAAPRRGTQKSDSDSSDEDLDRF), 50–69 (LRVRPDCHEHDGNELQTTPE), and 97–237 (ISKA…LGNE). The span at 52–62 (VRPDCHEHDGN) shows a compositional bias: basic and acidic residues. Polar residues predominate over residues 162 to 177 (STLQQEPQSTPSNVCD). The segment covering 181–190 (PKKKRKKKKK) has biased composition (basic residues). The Nucleolar localization signal (NLS1) motif lies at 182–190 (KKKRKKKKK). Composition is skewed to basic and acidic residues over residues 203–216 (ETMHIEPGKNELQA) and 225–237 (KLEMAHCDELGNE). Residues 217 to 225 (KRKKKKKQK) carry the Nucleolar localization signal (NLS2) motif.

Belongs to the CUSTOS family. In terms of assembly, interacts (via NLS1 and NLS2) with dvl2; the interaction is negatively regulated by Wnt stimulation. Interacts with csnk1a1. Interacts with ctnnb1; the interaction is positively regulated by Wnt stimulation. In terms of processing, phosphorylated by ck1/csnk1a1.

Its subcellular location is the nucleus envelope. Essential for Spemann-Mangold organizer formation and subsequent anterior head development in the embryo. Inhibits canonical Wnt signaling pathway by antagonizing nuclear import of beta-catenin (ctnnb1) during embryogenesis. In Xenopus laevis (African clawed frog), this protein is Protein CUSTOS.